The following is a 617-amino-acid chain: Dihydroxy-acid dehydratase (617 aa).

D81 is a binding site for Mg(2+). C122 is a binding site for [2Fe-2S] cluster. Mg(2+) contacts are provided by D123 and K124. An N6-carboxylysine modification is found at K124. Residue C195 participates in [2Fe-2S] cluster binding. E491 lines the Mg(2+) pocket. S517 functions as the Proton acceptor in the catalytic mechanism.

The protein belongs to the IlvD/Edd family. As to quaternary structure, homodimer. [2Fe-2S] cluster serves as cofactor. Requires Mg(2+) as cofactor.

It carries out the reaction (2R)-2,3-dihydroxy-3-methylbutanoate = 3-methyl-2-oxobutanoate + H2O. It catalyses the reaction (2R,3R)-2,3-dihydroxy-3-methylpentanoate = (S)-3-methyl-2-oxopentanoate + H2O. Its pathway is amino-acid biosynthesis; L-isoleucine biosynthesis; L-isoleucine from 2-oxobutanoate: step 3/4. It participates in amino-acid biosynthesis; L-valine biosynthesis; L-valine from pyruvate: step 3/4. Functionally, functions in the biosynthesis of branched-chain amino acids. Catalyzes the dehydration of (2R,3R)-2,3-dihydroxy-3-methylpentanoate (2,3-dihydroxy-3-methylvalerate) into 2-oxo-3-methylpentanoate (2-oxo-3-methylvalerate) and of (2R)-2,3-dihydroxy-3-methylbutanoate (2,3-dihydroxyisovalerate) into 2-oxo-3-methylbutanoate (2-oxoisovalerate), the penultimate precursor to L-isoleucine and L-valine, respectively. In Buchnera aphidicola subsp. Schizaphis graminum (strain Sg), this protein is Dihydroxy-acid dehydratase.